A 295-amino-acid chain; its full sequence is 4-hydroxy-tetrahydrodipicolinate synthase (295 aa).

Thr47 provides a ligand contact to pyruvate. Tyr135 (proton donor/acceptor) is an active-site residue. Lys163 functions as the Schiff-base intermediate with substrate in the catalytic mechanism. Position 206 (Ile206) interacts with pyruvate.

This sequence belongs to the DapA family. Homodimer.

It localises to the cytoplasm. It catalyses the reaction L-aspartate 4-semialdehyde + pyruvate = (2S,4S)-4-hydroxy-2,3,4,5-tetrahydrodipicolinate + H2O + H(+). Its pathway is amino-acid biosynthesis; L-lysine biosynthesis via DAP pathway; (S)-tetrahydrodipicolinate from L-aspartate: step 3/4. In terms of biological role, catalyzes the condensation of (S)-aspartate-beta-semialdehyde [(S)-ASA] and pyruvate to 4-hydroxy-tetrahydrodipicolinate (HTPA). In Staphylococcus aureus (strain Mu50 / ATCC 700699), this protein is 4-hydroxy-tetrahydrodipicolinate synthase.